A 366-amino-acid polypeptide reads, in one-letter code: GTPase Obg (366 aa).

The region spanning 1–162 is the Obg domain; that stretch reads MRFVDEATIN…RRLRLELKIL (162 aa). Positions 163–335 constitute an OBG-type G domain; the sequence is ADAGLLGLPN…VVDAMWRLRD (173 aa). Residues 169-176, 194-198, 218-221, 288-291, and 316-318 contribute to the GTP site; these read GLPNAGKS, FTTLT, DIPG, NKID, and SAM. 2 residues coordinate Mg(2+): serine 176 and threonine 196.

The protein belongs to the TRAFAC class OBG-HflX-like GTPase superfamily. OBG GTPase family. Monomer. Mg(2+) serves as cofactor.

The protein localises to the cytoplasm. An essential GTPase which binds GTP, GDP and possibly (p)ppGpp with moderate affinity, with high nucleotide exchange rates and a fairly low GTP hydrolysis rate. Plays a role in control of the cell cycle, stress response, ribosome biogenesis and in those bacteria that undergo differentiation, in morphogenesis control. This chain is GTPase Obg, found in Nitratidesulfovibrio vulgaris (strain ATCC 29579 / DSM 644 / CCUG 34227 / NCIMB 8303 / VKM B-1760 / Hildenborough) (Desulfovibrio vulgaris).